The sequence spans 277 residues: Carbonyl reductase [NADPH] 1 (277 aa).

Ser2 is subject to N-acetylserine. A phosphoserine mark is found at Ser2 and Ser30. NADP(+) contacts are provided by residues 10–34 (VTGA…GDVV), 63–64 (DI), and Asn90. Glutathione is bound by residues 95 to 97 (FKV) and Gln106. Ser140 lines the substrate pocket. Residue 193-194 (AY) participates in glutathione binding. The active-site Proton acceptor is Tyr194. NADP(+) contacts are provided by residues 194 to 198 (YGVTK) and 231 to 233 (VRT). Lys239 carries the N6-1-carboxyethyl lysine modification. Residues 258 to 277 (PPDAEGPHGQFVQDKKVEPW) are disordered.

The protein belongs to the short-chain dehydrogenases/reductases (SDR) family. As to quaternary structure, monomer.

Its subcellular location is the cytoplasm. The catalysed reaction is a secondary alcohol + NADP(+) = a ketone + NADPH + H(+). It carries out the reaction prostaglandin F2alpha + NADP(+) = prostaglandin E2 + NADPH + H(+). The enzyme catalyses prostaglandin E1 + NADP(+) = 15-oxoprostaglandin E1 + NADPH + H(+). It catalyses the reaction menadione + NADPH + H(+) = menadiol + NADP(+). The catalysed reaction is prostaglandin D2 + NADP(+) = 15-oxoprostaglandin D2 + NADPH + H(+). It carries out the reaction prostaglandin E2 + NADP(+) = 15-oxoprostaglandin E2 + NADPH + H(+). The enzyme catalyses prostaglandin F2alpha + NADP(+) = 15-oxoprostaglandin F2alpha + NADPH + H(+). It catalyses the reaction daunorubicin + NADPH + H(+) = 13-dihydrodaunorubicin + NADP(+). The catalysed reaction is S-nitrosoglutathione + NADPH + H(+) = S-(hydroxysulfenamide)glutathione + NADP(+). It carries out the reaction corticosterone + NADPH + H(+) = 20beta-dihydrocorticosterone + NADP(+). The enzyme catalyses a primary alcohol + NADP(+) = an aldehyde + NADPH + H(+). It catalyses the reaction cortisol + NADPH + H(+) = 20beta-dihydrocortisol + NADP(+). Functionally, NADPH-dependent reductase with broad substrate specificity. Catalyzes the reduction of a wide variety of carbonyl compounds including quinones, prostaglandins, menadione, plus various xenobiotics. Catalyzes the reduction of the antitumor anthracyclines doxorubicin and daunorubicin to the cardiotoxic compounds doxorubicinol and daunorubicinol. Can convert prostaglandin E to prostaglandin F2-alpha. Can bind glutathione, which explains its higher affinity for glutathione-conjugated substrates. Catalyzes the reduction of S-nitrosoglutathione. In addition, participates in the glucocorticoid metabolism by catalyzing the NADPH-dependent cortisol/corticosterone into 20beta-dihydrocortisol (20b-DHF) or 20beta-corticosterone (20b-DHB), which are weak agonists of NR3C1 and NR3C2 in adipose tissue. The polypeptide is Carbonyl reductase [NADPH] 1 (Mus musculus (Mouse)).